The sequence spans 560 residues: Nucleoprotein (560 aa).

Residues 54–236 form a binding site for the cap structure m7GTP region; the sequence is LRKAKRSDAD…ITRDESAVNI (183 aa). Residues 323–332 are compositionally biased toward polar residues; it reads GRSWDNTSVD. The tract at residues 323–349 is disordered; that stretch reads GRSWDNTSVDLNPKPDPGPRAPEKNGQ. Residues D380 and E382 each coordinate Mn(2+). E390, C497, H500, and C521 together coordinate Zn(2+). D525 lines the Mn(2+) pocket.

The protein belongs to the arenaviridae nucleocapsid protein family. Homomultimerizes to form the nucleocapsid. Binds to viral genomic RNA. Interacts with glycoprotein G2. Interacts with protein Z; this interaction probably directs the encapsidated genome to budding sites. Interacts with protein L; this interaction does not interfere with Z-L interaction. Interacts with host IKBKE (via Protein kinase domain); the interaction inhibits IKBKE kinase activity.

It is found in the virion. The protein localises to the host cytoplasm. In terms of biological role, encapsidates the genome, protecting it from nucleases. The encapsidated genomic RNA is termed the nucleocapsid (NC). Serves as template for viral transcription and replication. The increased presence of protein N in host cell does not seem to trigger the switch from transcription to replication as observed in other negative strain RNA viruses. Through the interaction with host IKBKE, strongly inhibits the phosphorylation and nuclear translocation of host IRF3, a protein involved in interferon activation pathway, leading to the inhibition of interferon-beta and IRF3-dependent promoters activation. Also encodes a functional 3'-5' exoribonuclease that degrades preferentially dsRNA substrates and thereby participates in the suppression of interferon induction. The chain is Nucleoprotein from Cupixi mammarenavirus (isolate Rat/Brasil/BeAn 119303/1970) (CPXV).